We begin with the raw amino-acid sequence, 552 residues long: Arginine--tRNA ligase (552 aa).

Positions Ala123–Arg133 match the 'HIGH' region motif.

It belongs to the class-I aminoacyl-tRNA synthetase family. In terms of assembly, monomer.

It is found in the cytoplasm. It carries out the reaction tRNA(Arg) + L-arginine + ATP = L-arginyl-tRNA(Arg) + AMP + diphosphate. The polypeptide is Arginine--tRNA ligase (Pelodictyon phaeoclathratiforme (strain DSM 5477 / BU-1)).